Consider the following 156-residue polypeptide: Putative type II restriction enzyme ApeKORF2002P (156 aa).

To M.jannaschii MJ1199.

It catalyses the reaction Endonucleolytic cleavage of DNA to give specific double-stranded fragments with terminal 5'-phosphates.. A putative type II restriction enzyme, its methylase would be APE_2002. The sequence is that of Putative type II restriction enzyme ApeKORF2002P from Aeropyrum pernix (strain ATCC 700893 / DSM 11879 / JCM 9820 / NBRC 100138 / K1).